The primary structure comprises 471 residues: MSEGVDLIDIYADEEFNQDSEFNNTDQIDLYDDVLTAASQPSDDRSSSTEPPPPVRQEPAPKPNNKTPAILYTYSGLRSRRAAVYVGSFSWWTTDQQLIQVIRSIGVYDVVELKFAENRANGQSKGYAEVVVASENSVHKLLELLPGKVLNGEKVDVRPATRQNLSQFEAQARKRECVRVPRGGIPPRAHSRDSSDSADGRATPSENLVPSSARVDKPPSVLPYFNRPPSALPLMGLPPPPIPPPPPLSSSFGVPPPPPGIHYQHLMPPPPRLPPHLAVPPPGAIPPALHLNPAFFPPPNATVGPPPDTYMKASTPYNHHGSRDSGPPPSTVSEAEFEEIMKRNRAISSSAISKAVSGASAGDYSDAIETLLTAIAVIKQSRVANDERCRVLISSLKDCLHGIEAKSYSVGASGSSSRKRHRSRERSPSRSRESSRRHRDLLHNEDRHDDYFQERNREHERHRDRERDRHH.

The disordered stretch occupies residues 34–68; that stretch reads VLTAASQPSDDRSSSTEPPPPVRQEPAPKPNNKTP. Over residues 50 to 62 the composition is skewed to pro residues; it reads EPPPPVRQEPAPK. Residues 82 to 162 form the RRM domain; it reads AAVYVGSFSW…EKVDVRPATR (81 aa). The disordered stretch occupies residues 176–220; it reads ECVRVPRGGIPPRAHSRDSSDSADGRATPSENLVPSSARVDKPPS. Positions 190–199 are enriched in basic and acidic residues; that stretch reads HSRDSSDSAD. Thr-203 carries the phosphothreonine modification. Position 205 is a phosphoserine (Ser-205). A Glycyl lysine isopeptide (Lys-Gly) (interchain with G-Cter in SUMO2) cross-link involves residue Lys-354. The segment at 409–471 is disordered; it reads SVGASGSSSR…HRDRERDRHH (63 aa). Ser-413 and Ser-423 each carry phosphoserine. The arg/Ser-rich domain stretch occupies residues 418–469; it reads RKRHRSRERSPSRSRESSRRHRDLLHNEDRHDDYFQERNREHERHRDRERDR. Basic and acidic residues-rich tracts occupy residues 425–434 and 441–471; these read ERSPSRSRES and LLHNEDRHDDYFQERNREHERHRDRERDRHH.

Belongs to the RRM CPSF6/7 family. In terms of assembly, component of the cleavage factor Im (CFIm) complex which is a heterotetramer composed of two subunits of NUDT21/CPSF5 and two subunits of CPSF6 or CPSF7 or a heterodimer of CPSF6 and CPSF7. The cleavage factor Im (CFIm) complex associates with the CPSF and CSTF complexes to promote the assembly of the core mRNA 3'-processing machinery. Interacts with NUDT21/CPSF5. Interacts (via Arg/Ser-rich domain) with FIP1L1 (preferentially via unphosphorylated form and Arg/Glu/Asp-rich region); this interaction mediates, at least in part, the interaction between the CFIm and CPSF complexes and may be inhibited by CPSF7 hyper-phosphorylation. In terms of processing, phosphorylated. Asymmetrically dimethylated on arginine residues by PRMT1.

Its subcellular location is the nucleus. The protein resides in the cytoplasm. Functionally, component of the cleavage factor Im (CFIm) complex that functions as an activator of the pre-mRNA 3'-end cleavage and polyadenylation processing required for the maturation of pre-mRNA into functional mRNAs. CFIm contributes to the recruitment of multiprotein complexes on specific sequences on the pre-mRNA 3'-end, so called cleavage and polyadenylation signals (pA signals). Most pre-mRNAs contain multiple pA signals, resulting in alternative cleavage and polyadenylation (APA) producing mRNAs with variable 3'-end formation. The CFIm complex acts as a key regulator of cleavage and polyadenylation site choice during APA through its binding to 5'-UGUA-3' elements localized in the 3'-untranslated region (UTR) for a huge number of pre-mRNAs. CPSF7 activates directly the mRNA 3'-processing machinery. Binds to pA signals in RNA substrates. This is Cleavage and polyadenylation specificity factor subunit 7 from Mus musculus (Mouse).